The primary structure comprises 602 residues: MSDDKGTYDPKEGCSDWFVLEAECSDASLDGDLEKLFEEGTDTDISDLIDNEDTVQGNSRELLCQQESEESEQQIHWLKRKYISSQEVLQLSPRLQCISISPQHKSKRRLFEQDSGLELSFNEAQDFTQQTLEVPATDVVPQGAKGLGIVKDLLKCNNVKAMLLAKFKEAFGVGFMELTRQYKSSKTCCRDWVLTVYAVQDELLESSKQLLIQHCAYIWLHQIPPMCLYLLCFNVGKSRETVLRLLTNLLQVSEIQIIAEPPKLRSTLSALFWYKGSMNPNVYAHGEYPEWIMTQTMINHQTAEATQFDLSTMVQYAYDNELSEEAEIAWHYAKLADTDANARAFLQHNSQARLVKDCAIMVRHYRRGEMKEMSMSSWIHKKLLVVEGEGHWSDIVKFVRYQDINFIQFLDSFKSFLHNTPKKSCMLIYGPPDTGKSMFTMSLIKVLKGKVLSFANYKSTFWLQPVADTKIALIDDVTYVCWDYIDQYLRNALDGGVVCLDMKHRAPCQIRFPPLMLTSNIDIMKEERYKYLRSRVQAFAFPHKFPFDSDNNPQFKLTDQSWKSFFERLWRQLELSDQEDEGDDGYSQRTFQCTTRESNGHL.

The Nuclear localization signal signature appears at 79 to 81; it reads KRK. Residues Ser85 and Ser92 each carry the phosphoserine; by host modification. The Nuclear export signal motif lies at 91–100; that stretch reads LSPRLQCISI. A DNA-binding region region spans residues 142-305; it reads QGAKGLGIVK…TMINHQTAEA (164 aa). Positions 404–554 constitute an SF3 helicase domain; it reads INFIQFLDSF…FPFDSDNNPQ (151 aa). Residue 430–437 coordinates ATP; sequence GPPDTGKS.

It belongs to the papillomaviridae E1 protein family. In terms of assembly, can form hexamers. Interacts with E2 protein; this interaction increases E1 DNA binding specificity. Interacts with host DNA polymerase subunit POLA2. Interacts with host single stranded DNA-binding protein RPA1. Interacts with host TOP1; this interaction stimulates the enzymatic activity of TOP1. Phosphorylated.

The protein resides in the host nucleus. The catalysed reaction is Couples ATP hydrolysis with the unwinding of duplex DNA by translocating in the 3'-5' direction.. It catalyses the reaction ATP + H2O = ADP + phosphate + H(+). ATP-dependent DNA 3'-5' helicase required for initiation of viral DNA replication. It forms a complex with the viral E2 protein. The E1-E2 complex binds to the replication origin which contains binding sites for both proteins. During the initial step, a dimer of E1 interacts with a dimer of protein E2 leading to a complex that binds the viral origin of replication with high specificity. Then, a second dimer of E1 displaces the E2 dimer in an ATP-dependent manner to form the E1 tetramer. Following this, two E1 monomers are added to each half of the site, which results in the formation of two E1 trimers on the viral ori. Subsequently, two hexamers will be created. The double hexamer acts as a bi-directional helicase machinery and unwinds the viral DNA and then recruits the host DNA polymerase to start replication. This chain is Replication protein E1, found in Homo sapiens (Human).